A 93-amino-acid chain; its full sequence is Neurophysin 1 (93 aa).

7 cysteine pairs are disulfide-bonded: cysteine 10/cysteine 54, cysteine 13/cysteine 27, cysteine 21/cysteine 44, cysteine 28/cysteine 34, cysteine 61/cysteine 74, cysteine 68/cysteine 86, and cysteine 75/cysteine 80.

This sequence belongs to the vasopressin/oxytocin family.

Its function is as follows. Neurophysin 1 specifically binds oxytocin. The chain is Neurophysin 1 from Struthio camelus (Common ostrich).